Reading from the N-terminus, the 701-residue chain is Polyribonucleotide nucleotidyltransferase (701 aa).

2 residues coordinate Mg(2+): Asp487 and Asp493. The region spanning 554–613 (PTMIAMKIDTDKIRDVIGKGGATIRAICEETKASIDIEDDGSIKIFGETKEAADAAKQRI) is the KH domain. The S1 motif domain occupies 623 to 691 (GKIYVGKVER…NRGRIKLSIK (69 aa)).

The protein belongs to the polyribonucleotide nucleotidyltransferase family. In terms of assembly, component of the RNA degradosome, which is a multiprotein complex involved in RNA processing and mRNA degradation. Mg(2+) is required as a cofactor.

Its subcellular location is the cytoplasm. The catalysed reaction is RNA(n+1) + phosphate = RNA(n) + a ribonucleoside 5'-diphosphate. Its function is as follows. Involved in mRNA degradation. Catalyzes the phosphorolysis of single-stranded polyribonucleotides processively in the 3'- to 5'-direction. This chain is Polyribonucleotide nucleotidyltransferase, found in Pseudomonas putida (strain ATCC 47054 / DSM 6125 / CFBP 8728 / NCIMB 11950 / KT2440).